The sequence spans 382 residues: Dual-specificity RNA methyltransferase RlmN (382 aa).

Glu-91 acts as the Proton acceptor in catalysis. The region spanning 97–339 is the Radical SAM core domain; that stretch reads ETDRGTLCIS…TTVRKTRGDD (243 aa). Cys-104 and Cys-344 are joined by a disulfide. The [4Fe-4S] cluster site is built by Cys-111, Cys-115, and Cys-118. S-adenosyl-L-methionine is bound by residues 165-166, Ser-197, 219-221, and Asn-301; these read GE and SLH. Residue Cys-344 is the S-methylcysteine intermediate of the active site.

This sequence belongs to the radical SAM superfamily. RlmN family. The cofactor is [4Fe-4S] cluster.

The protein resides in the cytoplasm. The catalysed reaction is adenosine(2503) in 23S rRNA + 2 reduced [2Fe-2S]-[ferredoxin] + 2 S-adenosyl-L-methionine = 2-methyladenosine(2503) in 23S rRNA + 5'-deoxyadenosine + L-methionine + 2 oxidized [2Fe-2S]-[ferredoxin] + S-adenosyl-L-homocysteine. It carries out the reaction adenosine(37) in tRNA + 2 reduced [2Fe-2S]-[ferredoxin] + 2 S-adenosyl-L-methionine = 2-methyladenosine(37) in tRNA + 5'-deoxyadenosine + L-methionine + 2 oxidized [2Fe-2S]-[ferredoxin] + S-adenosyl-L-homocysteine. Its function is as follows. Specifically methylates position 2 of adenine 2503 in 23S rRNA and position 2 of adenine 37 in tRNAs. m2A2503 modification seems to play a crucial role in the proofreading step occurring at the peptidyl transferase center and thus would serve to optimize ribosomal fidelity. This is Dual-specificity RNA methyltransferase RlmN from Polaromonas sp. (strain JS666 / ATCC BAA-500).